Consider the following 300-residue polypeptide: Putative S-adenosyl-L-methionine-dependent methyltransferase MAB_4328c (300 aa).

S-adenosyl-L-methionine contacts are provided by residues Asp126 and 155 to 156 (DL).

It belongs to the UPF0677 family.

Functionally, exhibits S-adenosyl-L-methionine-dependent methyltransferase activity. This chain is Putative S-adenosyl-L-methionine-dependent methyltransferase MAB_4328c, found in Mycobacteroides abscessus (strain ATCC 19977 / DSM 44196 / CCUG 20993 / CIP 104536 / JCM 13569 / NCTC 13031 / TMC 1543 / L948) (Mycobacterium abscessus).